We begin with the raw amino-acid sequence, 441 residues long: Ribosomal protein uS12 methylthiotransferase RimO (441 aa).

Residues 8–118 (PKIGFVSLGC…VLEHVHHYSP (111 aa)) form the MTTase N-terminal domain. Positions 17, 53, 82, 150, 154, and 157 each coordinate [4Fe-4S] cluster. The Radical SAM core domain maps to 136-373 (LTPRHYAYLK…MQLQQQISAE (238 aa)). A TRAM domain is found at 376 to 441 (QEKVGREILV…DEYDLWGTRV (66 aa)).

The protein belongs to the methylthiotransferase family. RimO subfamily. It depends on [4Fe-4S] cluster as a cofactor.

The protein localises to the cytoplasm. It catalyses the reaction L-aspartate(89)-[ribosomal protein uS12]-hydrogen + (sulfur carrier)-SH + AH2 + 2 S-adenosyl-L-methionine = 3-methylsulfanyl-L-aspartate(89)-[ribosomal protein uS12]-hydrogen + (sulfur carrier)-H + 5'-deoxyadenosine + L-methionine + A + S-adenosyl-L-homocysteine + 2 H(+). In terms of biological role, catalyzes the methylthiolation of an aspartic acid residue of ribosomal protein uS12. The chain is Ribosomal protein uS12 methylthiotransferase RimO from Klebsiella pneumoniae (strain 342).